Consider the following 334-residue polypeptide: Holliday junction branch migration complex subunit RuvB (334 aa).

A large ATPase domain (RuvB-L) region spans residues 4 to 184 (ADRLIQPQLQ…FGIPLRLEFY (181 aa)). ATP is bound by residues R24, G65, K68, T69, T70, 131–133 (EDY), R174, Y184, and R221. Position 69 (T69) interacts with Mg(2+). The small ATPAse domain (RuvB-S) stretch occupies residues 185 to 255 (NIKDLSTIVT…VADHALDLLD (71 aa)). The segment at 258–334 (NEGFDYMDRK…YQHFQLIKPE (77 aa)) is head domain (RuvB-H). DNA-binding residues include R294, R313, and R318.

It belongs to the RuvB family. In terms of assembly, homohexamer. Forms an RuvA(8)-RuvB(12)-Holliday junction (HJ) complex. HJ DNA is sandwiched between 2 RuvA tetramers; dsDNA enters through RuvA and exits via RuvB. An RuvB hexamer assembles on each DNA strand where it exits the tetramer. Each RuvB hexamer is contacted by two RuvA subunits (via domain III) on 2 adjacent RuvB subunits; this complex drives branch migration. In the full resolvosome a probable DNA-RuvA(4)-RuvB(12)-RuvC(2) complex forms which resolves the HJ.

The protein localises to the cytoplasm. The catalysed reaction is ATP + H2O = ADP + phosphate + H(+). Functionally, the RuvA-RuvB-RuvC complex processes Holliday junction (HJ) DNA during genetic recombination and DNA repair, while the RuvA-RuvB complex plays an important role in the rescue of blocked DNA replication forks via replication fork reversal (RFR). RuvA specifically binds to HJ cruciform DNA, conferring on it an open structure. The RuvB hexamer acts as an ATP-dependent pump, pulling dsDNA into and through the RuvAB complex. RuvB forms 2 homohexamers on either side of HJ DNA bound by 1 or 2 RuvA tetramers; 4 subunits per hexamer contact DNA at a time. Coordinated motions by a converter formed by DNA-disengaged RuvB subunits stimulates ATP hydrolysis and nucleotide exchange. Immobilization of the converter enables RuvB to convert the ATP-contained energy into a lever motion, pulling 2 nucleotides of DNA out of the RuvA tetramer per ATP hydrolyzed, thus driving DNA branch migration. The RuvB motors rotate together with the DNA substrate, which together with the progressing nucleotide cycle form the mechanistic basis for DNA recombination by continuous HJ branch migration. Branch migration allows RuvC to scan DNA until it finds its consensus sequence, where it cleaves and resolves cruciform DNA. In Shewanella putrefaciens (strain CN-32 / ATCC BAA-453), this protein is Holliday junction branch migration complex subunit RuvB.